The sequence spans 161 residues: Large ribosomal subunit protein uL15 (161 aa).

Residues 1-43 (MKLSEISDNPGARKKRMRIGRGIGSGKGKTGGRGGKGQTARSG) form a disordered region. Positions 21-37 (RGIGSGKGKTGGRGGKG) are enriched in gly residues.

The protein belongs to the universal ribosomal protein uL15 family. As to quaternary structure, part of the 50S ribosomal subunit.

Binds to the 23S rRNA. This is Large ribosomal subunit protein uL15 from Rhodopseudomonas palustris (strain BisB5).